The primary structure comprises 2316 residues: Receptor-type tyrosine-protein phosphatase zeta (2316 aa).

The signal sequence occupies residues 1–24 (MRILQSFLACVQLLCVCRLDWAYG). Topologically, residues 25 to 1637 (YYRQQRKLVE…LAEGLESEKK (1613 aa)) are extracellular. An Alpha-carbonic anhydrase domain is found at 36-300 (IGWSYTGALN…KFSRQVFSSY (265 aa)). Intrachain disulfides connect Cys56/Cys240 and Cys133/Cys264. N-linked (GlcNAc...) asparagine glycans are attached at residues Asn105, Asn134, Asn223, Asn232, Asn324, Asn381, and Asn497. Residues 314–413 (EPENVQADPE…LIVDMPTEDA (100 aa)) enclose the Fibronectin type-III domain. 2 disordered regions span residues 433-499 (YGKG…LNTS) and 518-537 (LPSQIGTNLPPHSVEGTSAS). N-linked (GlcNAc...) asparagine glycosylation is present at Asn552. Phosphoserine is present on residues Ser572 and Ser576. Disordered regions lie at residues 586 to 624 (KLDSGADDSSGSSPASSTVPFSTDNLSHGYTSSSDTPEA) and 636 to 720 (RNAL…EMPH). Residues 592–602 (DDSSGSSPASS) are compositionally biased toward low complexity. The O-linked (Xyl...) (chondroitin sulfate) serine glycan is linked to Ser595. The segment covering 603-621 (TVPFSTDNLSHGYTSSSDT) has biased composition (polar residues). A glycan (N-linked (GlcNAc...) asparagine) is linked at Asn610. Ser645 carries the post-translational modification Phosphoserine; alternate. O-linked (Xyl...) (chondroitin sulfate) serine; alternate glycosylation occurs at Ser645. Residue Ser647 is modified to Phosphoserine. Polar residues predominate over residues 666-675 (TDLTTQSETG). Asn685 carries an N-linked (GlcNAc...) asparagine glycan. Positions 699-711 (ETFSPDATASRGP) are enriched in polar residues. Asn786 carries an N-linked (GlcNAc...) asparagine glycan. Ser1005 carries O-linked (Xyl...) (chondroitin sulfate) serine glycosylation. Residues Asn1025 and Asn1058 are each glycosylated (N-linked (GlcNAc...) asparagine). Disordered regions lie at residues 1141 to 1172 (QASGDTWLKPGLSTNSEPALSDTASSEVSHPS), 1204 to 1228 (KTALPSGPRDPVLTETPMVEQSSSS), 1401 to 1521 (LLPS…DGRE), and 1545 to 1622 (TSDE…NSSH). The span at 1152 to 1172 (LSTNSEPALSDTASSEVSHPS) shows a compositional bias: polar residues. A compositionally biased stretch (polar residues) spans 1401–1413 (LLPSKATSKPTHS). The span at 1425 to 1439 (EDGDDYDDDDYDDID) shows a compositional bias: acidic residues. Asn1463 carries N-linked (GlcNAc...) asparagine glycosylation. Residues 1464 to 1478 (DSDTQESSLVDQSDP) show a composition bias toward polar residues. Residues Ser1550 and Ser1552 are each glycosylated (O-linked (Xyl...) (chondroitin sulfate) serine). Composition is skewed to polar residues over residues 1555-1569 (GTSDSLNDNETSTDF) and 1595-1609 (PRSSTPSVTSGHSGV). N-linked (GlcNAc...) asparagine glycosylation occurs at Asn1563. Low complexity predominate over residues 1610–1621 (SNSSEAEASNSS). Asn1611 and Asn1619 each carry an N-linked (GlcNAc...) asparagine glycan. A helical membrane pass occupies residues 1638–1663 (AVIPLVIVSALTFICLVVLVGILIYW). Residues 1664-2316 (RKCFQTAHFY…NIAESLESLV (653 aa)) are Cytoplasmic-facing. Residues Thr1685 and Thr1688 each carry the phosphothreonine modification. 2 Tyrosine-protein phosphatase domains span residues 1718-1993 (FTEE…LVEA) and 2024-2283 (LEKQ…VLSL). Substrate-binding positions include Asp1902, 1934–1940 (CSAGVGR), and Gln1978. Cys1934 serves as the catalytic Phosphocysteine intermediate. Ser2056 carries the post-translational modification Phosphoserine.

Belongs to the protein-tyrosine phosphatase family. Receptor class 5 subfamily. In terms of assembly, interacts with tenascin. Interacts with N-CAM and NG-CAM. The carbonic-anhydrase like domain interacts with CNTN1 (contactin). Interacts with PTN. Interaction with PTN promotes formation of homooligomers; oligomerization impairs phosphatase activity. Interacts (via chondroitin sulfate chains) with MDK (via C-terminal); this interaction is inhibited by PTN; this interaction promotes neuronal migration. As to expression, nervous tissue specific.

Its subcellular location is the cell membrane. It is found in the secreted. The enzyme catalyses O-phospho-L-tyrosyl-[protein] + H2O = L-tyrosyl-[protein] + phosphate. In terms of biological role, protein tyrosine phosphatase that negatively regulates oligodendrocyte precursor proliferation in the embryonic spinal cord. Required for normal differentiation of the precursor cells into mature, fully myelinating oligodendrocytes. May play a role in protecting oligondendrocytes against apoptosis. May play a role in the establishment of contextual memory, probably via the dephosphorylation of proteins that are part of important signaling cascades. Functionally, isoform 3 (phosphacan), previously designated 3F8 chondroitin sulfate proteoglycan or 3H1 keratan sulfate proteoglycan depending on the glycosylation status, is a soluble nervous tissue-specific proteoglycan. It is synthesized by glia and binds to neurons and to the neural cell adhesion molecules tenascin, N-CAM or NG-CAM but not to laminin and fibronectin. Phosphacan acts as a potent inhibitor of cell adhesion and neurite outgrowth. The chain is Receptor-type tyrosine-protein phosphatase zeta (Ptprz1) from Rattus norvegicus (Rat).